A 428-amino-acid chain; its full sequence is Probable 4-methylmuconolactone transporter (428 aa).

The Cytoplasmic portion of the chain corresponds to 1–26 (MFAWYKAGSPQQKKTFWACYSGWALD). The helical transmembrane segment at 27 to 47 (SFDMQMFSFLLPALTLTWGLT) threads the bilayer. The Periplasmic segment spans residues 48 to 50 (KAE). The chain crosses the membrane as a helical span at residues 51–71 (VGVLGTVALVVTAIGGWGAGI). Topologically, residues 72–80 (LSDRYGRAR) are cytoplasmic. Residues 81–101 (ILVLAIIWFTLFGVLAGFAQS) form a helical membrane-spanning segment. Residues 102-110 (YQQLLIART) are Periplasmic-facing. Residues 111 to 131 (LQGLGFGGEWAVGAALMAEVI) form a helical membrane-spanning segment. At 132–145 (DSRHRGKAIGFVQS) the chain is on the cytoplasmic side. The chain crosses the membrane as a helical span at residues 146-166 (GFALGWALAVVVATLLLAWLP). K167 is a topological domain (periplasmic). Residues 168–188 (EMAWRVAFWSGIIPALIVLFI) form a helical membrane-spanning segment. The Cytoplasmic segment spans residues 189 to 227 (RRHVKDSSMFERARQSRAPRASLSSVFNRKYARTLALSS). Residues 228–248 (VLVIGLQAGCYAILVWLPSLL) traverse the membrane as a helical segment. Over 249 to 252 (NQRQ) the chain is Periplasmic. A helical membrane pass occupies residues 253-273 (VAAGSMIVTVFIMAFGSFCGF). At 274–287 (AVTADLSDRIGRRP) the chain is on the cytoplasmic side. Residues 288–308 (TLILLSVCAWIVTVSYMLLPL) form a helical membrane-spanning segment. The Periplasmic portion of the chain corresponds to 309-314 (NTTLTA). The helical transmembrane segment at 315 to 335 (ILGFLVGFSAIGMFAALGPFL) threads the bilayer. At 336 to 356 (SELFPTNVRTTCMGFAYNVGK) the chain is on the cytoplasmic side. A helical transmembrane segment spans residues 357 to 371 (SIGAGSVVGVGVLST). The Periplasmic portion of the chain corresponds to 372-377 (HIGLAN). Residues 378-398 (AMGTFCLVAYAFAVFGIMLLP) traverse the membrane as a helical segment. Over 399-428 (ETRGIAIENIGEADAHSPAAPLAQPASARS) the chain is Cytoplasmic.

Belongs to the major facilitator superfamily. Sugar transporter (TC 2.A.1.1) family.

The protein resides in the cell inner membrane. In terms of biological role, probable uptake of 4-methylmuconolactone. The chain is Probable 4-methylmuconolactone transporter from Cupriavidus pinatubonensis (strain JMP 134 / LMG 1197) (Cupriavidus necator (strain JMP 134)).